A 297-amino-acid chain; its full sequence is uncharacterized protein (297 aa).

The interval 1 to 44 (MQKSKSIFIPKAFAPQQQAQAPPSKLDNKDPSVEGEGASKPKDD) is disordered. The span at 10–23 (PKAFAPQQQAQAPP) shows a compositional bias: low complexity. Residues 26-44 (LDNKDPSVEGEGASKPKDD) show a composition bias toward basic and acidic residues.

This is an uncharacterized protein from Invertebrate iridescent virus 3 (IIV-3).